We begin with the raw amino-acid sequence, 175 residues long: Ribosome maturation factor RimM (175 aa).

Residues 97-170 enclose the PRC barrel domain; that stretch reads NGQYYWTDVL…YLYVDWQMAW (74 aa).

It belongs to the RimM family. As to quaternary structure, binds ribosomal protein uS19.

The protein resides in the cytoplasm. In terms of biological role, an accessory protein needed during the final step in the assembly of 30S ribosomal subunit, possibly for assembly of the head region. Essential for efficient processing of 16S rRNA. May be needed both before and after RbfA during the maturation of 16S rRNA. It has affinity for free ribosomal 30S subunits but not for 70S ribosomes. This Dichelobacter nodosus (strain VCS1703A) protein is Ribosome maturation factor RimM.